The chain runs to 676 residues: MADFETDEASSKSESPEQEGQGSEDKSLLHQRLAIRELIDTEVSYLHTLRLCTSDIRGHLQQLPPGDLDILFSNIDDIIQVSSRFLHGLQETACKEEKQAHLIGNLFLEFQEELEQVYKVYCANYDQALLLVKAYQKEPELQKEIQGIIEAAVPQAGPSGLSFLLVIPLQRITKYPLLLQKILENTPADASAHPVLQRATSALQDVNSNINEYKMRKEVALKYTKVEQLSLRERLARINTHTLSKKTTRLSQLLKQEAGLVPRTEDKEFDDLEERFQWVSLCVTELKSNVAAYMDNLEAFLCFRPHERNLDIPGGAAEQYCSLARDLQLQAFLQFKQRLTGLVWQPLCSLARALVGPQNLIKKRLDKLLDFERVEEKLLDVGSVTYEEEAARHTYQALNSLIVAELPQFNHLVMQWLGQILRTFVVLQRDLADQVLRRAESSMALLPHRHVSEPDFQKLLEDTLGQSSSQLRHFRESFEKVLPPSTSQPLLPGSEHQMQSLLTRYGPGKIYQVTSNINGTGTLDLTLPRGQIVALLQNKDTKGNNSRWLVDTGGHRGYVPAGKLQLYHPINPSEKEPRRQTGMPEDYWLPTPEPTQPSVPTVPTMSQVVAVYPFVARSTHELSLQAGQPVTILEAQDKKGNPEWSLVEANGQRGYVPSNFLARTPSPTPRGWNLPS.

The tract at residues 1 to 26 (MADFETDEASSKSESPEQEGQGSEDK) is disordered. Residues 30–213 (HQRLAIRELI…QDVNSNINEY (184 aa)) enclose the DH domain. One can recognise a BAR domain in the interval 254–455 (LKQEAGLVPR…LPHRHVSEPD (202 aa)). 2 consecutive SH3 domains span residues 506-569 (GPGK…LYHP) and 603-666 (PTMS…RTPS). Disordered stretches follow at residues 568–601 (HPIN…SVPT) and 657–676 (PSNF…NLPS).

Functionally, may act as a guanine nucleotide exchange factor (GEF). This is Rho guanine nucleotide exchange factor 37 (Arhgef37) from Rattus norvegicus (Rat).